Consider the following 349-residue polypeptide: S-adenosylmethionine:tRNA ribosyltransferase-isomerase (349 aa).

The protein belongs to the QueA family. Monomer.

It localises to the cytoplasm. The catalysed reaction is 7-aminomethyl-7-carbaguanosine(34) in tRNA + S-adenosyl-L-methionine = epoxyqueuosine(34) in tRNA + adenine + L-methionine + 2 H(+). It participates in tRNA modification; tRNA-queuosine biosynthesis. In terms of biological role, transfers and isomerizes the ribose moiety from AdoMet to the 7-aminomethyl group of 7-deazaguanine (preQ1-tRNA) to give epoxyqueuosine (oQ-tRNA). The protein is S-adenosylmethionine:tRNA ribosyltransferase-isomerase of Parabacteroides distasonis (strain ATCC 8503 / DSM 20701 / CIP 104284 / JCM 5825 / NCTC 11152).